Here is a 142-residue protein sequence, read N- to C-terminus: Myosin-2 essential light chain (142 aa).

2 EF-hand domains span residues 2–37 (DDLA…LGQN) and 75–110 (HTVE…LGER).

Myosin is a hexamer of 2 heavy chains and 4 light chains (two regulatory light chains and two essential light chains).

Its subcellular location is the cytoplasm. It localises to the cytoskeleton. Functionally, required for cytokinesis and embryo elongation. May regulate myosin II complex formation and/or the association of myosin with actin. May be involved in the organization of mlc-4 and nmy-2 into bundles. The polypeptide is Myosin-2 essential light chain (Caenorhabditis elegans).